The sequence spans 311 residues: Telomere-binding protein I1 homolog (311 aa).

It belongs to the chordopoxvirinae I1 family.

The protein localises to the virion. Functionally, late DNA-binding protein which binds to the hairpin form of the viral telomeric sequence. Required for the production of mature virions (MV). This chain is Telomere-binding protein I1 homolog, found in Fowlpox virus (strain NVSL) (FPV).